The sequence spans 222 residues: ATP-dependent dethiobiotin synthetase BioD 2 (222 aa).

A Mg(2+)-binding site is contributed by threonine 17. Residue lysine 38 is part of the active site. Position 42 (threonine 42) interacts with substrate. Residues aspartate 55 and glutamate 112 each coordinate Mg(2+). ATP is bound by residues aspartate 55, 112–115 (EGCG), 172–173 (NR), 201–203 (PYL), and glutamate 208.

The protein belongs to the dethiobiotin synthetase family. Homodimer. Mg(2+) serves as cofactor.

It is found in the cytoplasm. The catalysed reaction is (7R,8S)-7,8-diammoniononanoate + CO2 + ATP = (4R,5S)-dethiobiotin + ADP + phosphate + 3 H(+). The protein operates within cofactor biosynthesis; biotin biosynthesis; biotin from 7,8-diaminononanoate: step 1/2. Functionally, catalyzes a mechanistically unusual reaction, the ATP-dependent insertion of CO2 between the N7 and N8 nitrogen atoms of 7,8-diaminopelargonic acid (DAPA, also called 7,8-diammoniononanoate) to form a ureido ring. The sequence is that of ATP-dependent dethiobiotin synthetase BioD 2 from Yersinia pestis.